A 321-amino-acid chain; its full sequence is UDP-3-O-acylglucosamine N-acyltransferase (321 aa).

The active-site Proton acceptor is His-231.

Belongs to the transferase hexapeptide repeat family. LpxD subfamily. As to quaternary structure, homotrimer.

The catalysed reaction is a UDP-3-O-[(3R)-3-hydroxyacyl]-alpha-D-glucosamine + a (3R)-hydroxyacyl-[ACP] = a UDP-2-N,3-O-bis[(3R)-3-hydroxyacyl]-alpha-D-glucosamine + holo-[ACP] + H(+). It functions in the pathway bacterial outer membrane biogenesis; LPS lipid A biosynthesis. Functionally, catalyzes the N-acylation of UDP-3-O-acylglucosamine using 3-hydroxyacyl-ACP as the acyl donor. Is involved in the biosynthesis of lipid A, a phosphorylated glycolipid that anchors the lipopolysaccharide to the outer membrane of the cell. This is UDP-3-O-acylglucosamine N-acyltransferase from Campylobacter jejuni subsp. jejuni serotype O:2 (strain ATCC 700819 / NCTC 11168).